A 165-amino-acid polypeptide reads, in one-letter code: Protein SprT (165 aa).

One can recognise a SprT-like domain in the interval 10-158 (EACYRQAEHF…CRRCKATLVF (149 aa)). A Zn(2+)-binding site is contributed by His69. Glu70 is an active-site residue. His73 is a Zn(2+) binding site.

It belongs to the SprT family. The cofactor is Zn(2+).

It localises to the cytoplasm. The chain is Protein SprT from Pseudomonas aeruginosa (strain LESB58).